A 366-amino-acid polypeptide reads, in one-letter code: tRNA/tmRNA (uracil-C(5))-methyltransferase (366 aa).

S-adenosyl-L-methionine-binding residues include glutamine 188, tyrosine 216, asparagine 221, glutamate 237, and aspartate 297. Cysteine 322 serves as the catalytic Nucleophile. Glutamate 356 (proton acceptor) is an active-site residue.

This sequence belongs to the class I-like SAM-binding methyltransferase superfamily. RNA M5U methyltransferase family. TrmA subfamily.

The enzyme catalyses uridine(54) in tRNA + S-adenosyl-L-methionine = 5-methyluridine(54) in tRNA + S-adenosyl-L-homocysteine + H(+). It catalyses the reaction uridine(341) in tmRNA + S-adenosyl-L-methionine = 5-methyluridine(341) in tmRNA + S-adenosyl-L-homocysteine + H(+). In terms of biological role, dual-specificity methyltransferase that catalyzes the formation of 5-methyluridine at position 54 (m5U54) in all tRNAs, and that of position 341 (m5U341) in tmRNA (transfer-mRNA). The polypeptide is tRNA/tmRNA (uracil-C(5))-methyltransferase (Histophilus somni (strain 129Pt) (Haemophilus somnus)).